The following is a 146-amino-acid chain: Hemoglobin subunit beta (146 aa).

An N-acetylvaline modification is found at valine 1. The Globin domain occupies 2 to 146; sequence HLTPEEKALV…VANALAHKYH (145 aa). Lysine 59 bears the N6-acetyllysine mark. Histidine 63 serves as a coordination point for heme b. An N6-acetyllysine modification is found at lysine 82. Histidine 92 provides a ligand contact to heme b. Cysteine 93 is modified (S-nitrosocysteine). Lysine 144 carries the N6-acetyllysine modification.

The protein belongs to the globin family. In terms of assembly, heterotetramer of two alpha chains and two beta chains. In terms of tissue distribution, red blood cells.

In terms of biological role, involved in oxygen transport from the lung to the various peripheral tissues. This is Hemoglobin subunit beta (HBB) from Trichechus inunguis (Amazon manatee).